The sequence spans 487 residues: b(0,+)-type amino acid transporter 1 (487 aa).

A disordered region spans residues 1 to 22; that stretch reads MGETVPRRRREDEKSIQSDEPK. Over 1-31 the chain is Cytoplasmic; it reads MGETVPRRRREDEKSIQSDEPKTTSLQKEVG. S18 is modified (phosphoserine). Residues 32 to 55 form a helical membrane-spanning segment; sequence LISGICIIVGTIIGSGIFISPKSV. An L-arginine-binding site is contributed by 43 to 47; it reads IIGSG. At 56 to 62 the chain is on the extracellular side; the sequence is LSNTQAV. The helical transmembrane segment at 63–84 threads the bilayer; it reads GPCLIIWAACGVLGTLGALCFA. The Cytoplasmic segment spans residues 85–110; it reads ELGTMITKSGGEYPYLMEAFGPIPAY. The chain crosses the membrane as a helical span at residues 111–137; sequence LFSWSSLLVMKPSSFAIICLSFSEYVA. Residues 138 to 147 lie on the Extracellular side of the membrane; that stretch reads TPFYSGCEPP. The next 2 membrane-spanning stretches (helical) occupy residues 148–169 and 170–193; these read KVVV…NSLS and VRLG…IIII. Over 194–217 the chain is Extracellular; sequence SGLVLLAQGNTKNFENSFEGAEVS. Residues 218–238 form a helical membrane-spanning segment; sequence VGAISLALYNGLWAYDGWNQL. D233 provides a ligand contact to L-arginine. Over 239-251 the chain is Cytoplasmic; it reads NYITEELRNPFRN. A helical membrane pass occupies residues 252–274; that stretch reads LPLAIIFGIPLVTVCYILINISY. Residues 275-302 lie on the Extracellular side of the membrane; the sequence is FTVMTPTELLQSQAVAVTFGDRVLYPAS. Residues 303-325 form a helical membrane-spanning segment; sequence WIVPVFVAFSTIGAANGTCFTAG. The Cytoplasmic portion of the chain corresponds to 326-351; it reads RLVYVAGREGHMLKVLSYISVRRLTP. 2 consecutive transmembrane segments (helical) span residues 352-370 and 371-391; these read APAI…IPGD and INSL…LTIL. Over 392-410 the chain is Cytoplasmic; that stretch reads GLIVMRFTRKELERPIKVP. Residues 411–431 form a helical membrane-spanning segment; that stretch reads IFIPILVTFIAAFLVLAPVIT. Residues 432 to 434 lie on the Extracellular side of the membrane; it reads NPA. A helical transmembrane segment spans residues 435-450; that stretch reads WEYLYCVLFILSGLVF. The Cytoplasmic segment spans residues 451–487; that stretch reads YFLFVYYKFEWAQKISKPITMHLQMLMEVVPPEPDPK.

Belongs to the amino acid-polyamine-organocation (APC) superfamily. Disulfide-linked heterodimer composed of the catalytic light chain subunit SLC7A9 and the heavy chain subunit. The heterodimer is the minimal functional unit. Assembles in heterotetramers (dimers of heterodimers) and higher order oligomers. Interacts with CAV1. In terms of tissue distribution, kidney and small intestine.

The protein resides in the apical cell membrane. It carries out the reaction L-leucine(out) + L-arginine(in) = L-leucine(in) + L-arginine(out). The enzyme catalyses L-histidine(out) + L-arginine(in) = L-histidine(in) + L-arginine(out). The catalysed reaction is L-arginine(in) + L-phenylalanine(out) = L-arginine(out) + L-phenylalanine(in). It catalyses the reaction L-cysteine(out) + L-arginine(in) = L-cysteine(in) + L-arginine(out). It carries out the reaction L-cystine(out) + L-arginine(in) = L-cystine(in) + L-arginine(out). The enzyme catalyses L-lysine(out) + L-arginine(in) = L-lysine(in) + L-arginine(out). Mediates the electrogenic exchange between cationic amino acids and neutral amino acids, with a stoichiometry of 1:1. Has system b(0,+)-like activity with high affinity for extracellular cationic amino acids and L-cystine and lower affinity for intracellular neutral amino acids. Substrate exchange is driven by high concentration of intracellular neutral amino acids and the intracellular reduction of L-cystine to L-cysteine. Required for reabsorption of L-cystine and dibasic amino acids across the brush border membrane in renal proximal tubules. This Oryctolagus cuniculus (Rabbit) protein is b(0,+)-type amino acid transporter 1.